The primary structure comprises 367 residues: tRNA/tmRNA (uracil-C(5))-methyltransferase (367 aa).

S-adenosyl-L-methionine is bound by residues Gln-190, Tyr-218, Asn-223, Glu-239, and Asp-299. Residue Cys-324 is the Nucleophile of the active site. The active-site Proton acceptor is Glu-358.

It belongs to the class I-like SAM-binding methyltransferase superfamily. RNA M5U methyltransferase family. TrmA subfamily.

The catalysed reaction is uridine(54) in tRNA + S-adenosyl-L-methionine = 5-methyluridine(54) in tRNA + S-adenosyl-L-homocysteine + H(+). It catalyses the reaction uridine(341) in tmRNA + S-adenosyl-L-methionine = 5-methyluridine(341) in tmRNA + S-adenosyl-L-homocysteine + H(+). Functionally, dual-specificity methyltransferase that catalyzes the formation of 5-methyluridine at position 54 (m5U54) in all tRNAs, and that of position 341 (m5U341) in tmRNA (transfer-mRNA). This Yersinia enterocolitica serotype O:8 / biotype 1B (strain NCTC 13174 / 8081) protein is tRNA/tmRNA (uracil-C(5))-methyltransferase.